A 496-amino-acid polypeptide reads, in one-letter code: Glycylpeptide N-tetradecanoyltransferase 1 (496 aa).

The tract at residues 1–82 (MADESETAVK…SAQDQPVKMN (82 aa)) is disordered. Ser-31 and Ser-47 each carry phosphoserine. The segment covering 55-66 (KKKKKKQKKKKE) has biased composition (basic residues). Ser-83 carries the post-translational modification Phosphoserine. Positions 118, 119, 120, 247, 248, 249, 250, 256, 258, 259, and 260 each coordinate tetradecanoyl-CoA.

It belongs to the NMT family. In terms of tissue distribution, heart, gut, kidney, liver and placenta.

It is found in the cytoplasm. The protein localises to the cytosol. The protein resides in the membrane. It carries out the reaction N-terminal glycyl-[protein] + tetradecanoyl-CoA = N-tetradecanoylglycyl-[protein] + CoA + H(+). The enzyme catalyses N-terminal glycyl-L-lysyl-[protein] + tetradecanoyl-CoA = N-terminal glycyl-(N(6)-tetradecanoyl)-L-lysyl-[protein] + CoA + H(+). Adds a myristoyl group to the N-terminal glycine residue of certain cellular and viral proteins. Also able to mediate N-terminal lysine myristoylation of proteins: catalyzes myristoylation of ARF6 on both 'Gly-2' and 'Lys-3'. Lysine myristoylation is required to maintain ARF6 on membranes during the GTPase cycle. The sequence is that of Glycylpeptide N-tetradecanoyltransferase 1 from Homo sapiens (Human).